We begin with the raw amino-acid sequence, 268 residues long: Small ribosomal subunit protein uS3 (268 aa).

Positions 39–107 (VREYLKKKLK…PVHVNIEEIR (69 aa)) constitute a KH type-2 domain. Residues 216–268 (VEEVAEEKRPRRNARPGGDRRPRRDGEGGGPAGARRGAPRRAGGAGGDGKTGE) are disordered. Residues 232–242 (GGDRRPRRDGE) are compositionally biased toward basic and acidic residues. A compositionally biased stretch (low complexity) spans 248–257 (GARRGAPRRA). Residues 258 to 268 (GGAGGDGKTGE) are compositionally biased toward gly residues.

Belongs to the universal ribosomal protein uS3 family. Part of the 30S ribosomal subunit. Forms a tight complex with proteins S10 and S14.

Binds the lower part of the 30S subunit head. Binds mRNA in the 70S ribosome, positioning it for translation. The chain is Small ribosomal subunit protein uS3 from Paraburkholderia phytofirmans (strain DSM 17436 / LMG 22146 / PsJN) (Burkholderia phytofirmans).